The following is a 273-amino-acid chain: MADSSKKLTVLLSGASGLTGSLAFKKLKERSDKFEVRGLVRSEASKQKLGGGDEIFIGDISDPKTLEPAMEGIDALIILTSAIPRMKPTEEFTAEMISGGRSEDVIDASFSGPMPEFYYDEGQYPEQVDWIGQKNQIDTAKKMGVKHIVLVGSMGGCDPDHFLNHMGNGNILIWKRKAEQYLADSGVPYTIIRAGGLDNKAGGVRELLVAKDDVLLPTENGFIARADVAEACVQALEIEEVKNKAFDLGSKPEGVGEATKDFKALFSQVTTPF.

Residue Ser-153 is the Proton donor of the active site. Substrate-binding positions include 157–161 and Lys-175; that span reads CDPDH.

The protein belongs to the NAD(P)-dependent epimerase/dehydratase family. In terms of assembly, monomer.

The enzyme catalyses dihydrosanguinarine + NADP(+) = sanguinarine + NADPH. The catalysed reaction is dihydrosanguinarine + NAD(+) = sanguinarine + NADH. It catalyses the reaction dihydrochelirubine + NAD(+) = chelirubine + NADH. It carries out the reaction dihydrochelirubine + NADP(+) = chelirubine + NADPH. Its activity is regulated as follows. Inhibited by iodoacetamide and irreversibly by its product, dihydrosanguinarine. Catalyzes the reduction of benzophenanthridines, preferentially sanguinarine, to the corresponding dihydroalkaloids. Involved in detoxifying the phytoalexins produced by plant itself. The sanguinarine produced by intact cells upon elicitation, after excretion and binding to cell wall elements, is rapidly reabsorbed and reduced to the less toxic dihydrosanguinarine. Can work with both NAD(P) or NAD as a hydrogen donor, but at low concentrations, the reaction velocity with NAD(P)H is threefold higher than with NADH. However, chelerythrine shows maximum conversion rates with NADH. The substrate preference is sanguinarine &gt; chelerythrine &gt; chelirubine, macarpine or 10-OH-chelerythrine. No activity with berberine or phenanthridine cations. The sequence is that of Sanguinarine reductase from Eschscholzia californica (California poppy).